A 585-amino-acid chain; its full sequence is Frizzled-5 (585 aa).

The signal sequence occupies residues 1–26 (MARPDPSAPPSLLLLLLAQLVGRAAA). Over 27–238 (ASKAPVCQEI…PDERTFATFW (212 aa)) the chain is Extracellular. Residues 28 to 150 (SKAPVCQEIT…GDAEVLCMDY (123 aa)) enclose the FZ domain. Disulfide bonds link Cys33-Cys94, Cys41-Cys87, Cys78-Cys116, Cys105-Cys147, and Cys109-Cys133. A glycan (N-linked (GlcNAc...) asparagine) is linked at Asn47. Asn151 carries N-linked (GlcNAc...) asparagine glycosylation. The interval 156-182 (TTASPKSFPAKPTLPGPPGAPSSGGEC) is disordered. Residues 239–259 (IGLWSVLCFISTSTTVATFLI) form a helical membrane-spanning segment. Over 260–270 (DMERFRYPERP) the chain is Cytoplasmic. Residues 271-291 (IIFLSACYLCVSLGFLVRLVV) form a helical membrane-spanning segment. At 292–315 (GHASVACSREHSHIHYETTGPALC) the chain is on the extracellular side. Residues 316 to 336 (TVVFLLVYFFGMASSIWWVIL) traverse the membrane as a helical segment. Topologically, residues 337–358 (SLTWFLAAGMKWGNEAIAGYAQ) are cytoplasmic. A helical membrane pass occupies residues 359–379 (YFHLAAWLIPSVKSITALALS). Topologically, residues 380–402 (SVDGDPVAGVCYVGNQNLNSLRG) are extracellular. A helical membrane pass occupies residues 403–423 (FVLGPLVLYLLVGTLFLLAGF). The Cytoplasmic portion of the chain corresponds to 424–449 (VSLFRIRSVIKQGGTKTDKLEKLMIR). Residues 450–470 (IGIFTLLYTVPASIVVACYLY) traverse the membrane as a helical segment. Topologically, residues 471–500 (EQHYRESWEAALTCACPGSDAGQPRAKPEY) are extracellular. Residues 501 to 521 (WVLMLKYFMCLVVGITSGVWI) form a helical membrane-spanning segment. Over 522–585 (WSGKTLESWR…YHKQVSLSHV (64 aa)) the chain is Cytoplasmic. The short motif at 525–530 (KTLESW) is the Lys-Thr-X-X-X-Trp motif, mediates interaction with the PDZ domain of Dvl family members element. The PDZ-binding signature appears at 583–585 (SHV).

The protein belongs to the G-protein coupled receptor Fz/Smo family. As to quaternary structure, binding of unsaturated fatty acid molecules (via FZ domain) promotes homodimerization (via FZ domain). Interacts with WNT2B. Interacts with WNT7A. Interacts with GOPC. In terms of processing, ubiquitinated by RNF43 and ZNRF3, leading to its degradation by the proteasome.

It is found in the cell membrane. The protein localises to the golgi apparatus membrane. Its subcellular location is the synapse. It localises to the perikaryon. The protein resides in the cell projection. It is found in the dendrite. The protein localises to the axon. Its function is as follows. Receptor for Wnt proteins. Functions in the canonical Wnt/beta-catenin signaling pathway. In vitro activates WNT2, WNT10B, WNT5A, but not WNT2B or WNT4 signaling. In neurons, activation by WNT7A promotes formation of synapses. May be involved in transduction and intercellular transmission of polarity information during tissue morphogenesis and/or in differentiated tissues. Plays a role in yolk sac angiogenesis and in placental vascularization. Plays a role in ocular development. The polypeptide is Frizzled-5 (Fzd5) (Rattus norvegicus (Rat)).